Consider the following 274-residue polypeptide: 4-diphosphocytidyl-2-C-methyl-D-erythritol kinase (274 aa).

The active site involves Lys8. Residue 94 to 104 (PSGAGLGGGSA) participates in ATP binding. Asp136 is an active-site residue.

This sequence belongs to the GHMP kinase family. IspE subfamily.

It catalyses the reaction 4-CDP-2-C-methyl-D-erythritol + ATP = 4-CDP-2-C-methyl-D-erythritol 2-phosphate + ADP + H(+). Its pathway is isoprenoid biosynthesis; isopentenyl diphosphate biosynthesis via DXP pathway; isopentenyl diphosphate from 1-deoxy-D-xylulose 5-phosphate: step 3/6. Functionally, catalyzes the phosphorylation of the position 2 hydroxy group of 4-diphosphocytidyl-2C-methyl-D-erythritol. This Bacteroides fragilis (strain YCH46) protein is 4-diphosphocytidyl-2-C-methyl-D-erythritol kinase.